Reading from the N-terminus, the 92-residue chain is RNA-binding protein Hfq (92 aa).

The Sm domain maps to Asp-9 to Val-68. The segment at Pro-72–Gln-92 is disordered.

It belongs to the Hfq family. As to quaternary structure, homohexamer.

Its function is as follows. RNA chaperone that binds small regulatory RNA (sRNAs) and mRNAs to facilitate mRNA translational regulation in response to envelope stress, environmental stress and changes in metabolite concentrations. Also binds with high specificity to tRNAs. This chain is RNA-binding protein Hfq, found in Xanthomonas campestris pv. campestris (strain 8004).